A 424-amino-acid chain; its full sequence is Adenylosuccinate synthetase (424 aa).

GTP contacts are provided by residues G12–K18 and G40–T42. The active-site Proton acceptor is D13. Residues D13 and G40 each coordinate Mg(2+). Residues D13 to K16, N38 to H41, T130, R144, N220, T235, and R299 each bind IMP. The active-site Proton donor is H41. V295–R301 is a binding site for substrate. GTP is bound by residues R301, K327 to D329, and G412 to G414.

It belongs to the adenylosuccinate synthetase family. In terms of assembly, homodimer. The cofactor is Mg(2+).

It is found in the cytoplasm. It catalyses the reaction IMP + L-aspartate + GTP = N(6)-(1,2-dicarboxyethyl)-AMP + GDP + phosphate + 2 H(+). Its pathway is purine metabolism; AMP biosynthesis via de novo pathway; AMP from IMP: step 1/2. In terms of biological role, plays an important role in the de novo pathway and in the salvage pathway of purine nucleotide biosynthesis. Catalyzes the first committed step in the biosynthesis of AMP from IMP. In Aspergillus niger (strain ATCC MYA-4892 / CBS 513.88 / FGSC A1513), this protein is Adenylosuccinate synthetase.